We begin with the raw amino-acid sequence, 155 residues long: Protein FAM201A (155 aa).

The disordered stretch occupies residues 130–155 (QDQGCGQHRPHSPRLVDIALPGGGWT).

The sequence is that of Protein FAM201A (FAM201A) from Homo sapiens (Human).